We begin with the raw amino-acid sequence, 416 residues long: Subtilisin-like protease 12 (416 aa).

The first 19 residues, M1–A19, serve as a signal peptide directing secretion. Residues A20 to A116 constitute a propeptide that is removed on maturation. Residues Y35–V115 enclose the Inhibitor I9 domain. N-linked (GlcNAc...) asparagine glycans are attached at residues N123, N136, and N150. Residues T125–A416 form the Peptidase S8 domain. Residues D157 and H188 each act as charge relay system in the active site. Residues N249, N305, N334, and N353 are each glycosylated (N-linked (GlcNAc...) asparagine). Catalysis depends on S362, which acts as the Charge relay system. N404 and N412 each carry an N-linked (GlcNAc...) asparagine glycan.

Belongs to the peptidase S8 family.

Its subcellular location is the secreted. Functionally, secreted subtilisin-like serine protease with keratinolytic activity that contributes to pathogenicity. The protein is Subtilisin-like protease 12 (SUB12) of Arthroderma benhamiae (strain ATCC MYA-4681 / CBS 112371) (Trichophyton mentagrophytes).